Here is a 392-residue protein sequence, read N- to C-terminus: Xylose operon regulatory protein (392 aa).

The HTH araC/xylS-type domain occupies 288 to 386 (IQAMHYIRNH…DTTPKEYRDV (99 aa)). 2 DNA-binding regions (H-T-H motif) span residues 305–326 (DQVL…KEEV) and 353–376 (INEI…KKAY).

Its function is as follows. Regulatory protein for the xylBAFGHR operon. This chain is Xylose operon regulatory protein (xylR), found in Escherichia coli O157:H7.